Reading from the N-terminus, the 216-residue chain is Uracil phosphoribosyltransferase (216 aa).

Residues R85, R110, and 135-143 contribute to the 5-phospho-alpha-D-ribose 1-diphosphate site; that span reads DPMVATGYS. Residues I200 and 205-207 each bind uracil; that span reads GDA. Residue D206 coordinates 5-phospho-alpha-D-ribose 1-diphosphate.

The protein belongs to the UPRTase family. It depends on Mg(2+) as a cofactor.

The enzyme catalyses UMP + diphosphate = 5-phospho-alpha-D-ribose 1-diphosphate + uracil. The protein operates within pyrimidine metabolism; UMP biosynthesis via salvage pathway; UMP from uracil: step 1/1. With respect to regulation, allosterically activated by GTP. Catalyzes the conversion of uracil and 5-phospho-alpha-D-ribose 1-diphosphate (PRPP) to UMP and diphosphate. This is Uracil phosphoribosyltransferase from Ralstonia pickettii (strain 12J).